Reading from the N-terminus, the 311-residue chain is Solute carrier family 25 member 36-A (311 aa).

Solcar repeat units follow at residues 4–108 (RDTL…SKEK), 116–203 (DSTQ…IKRK), and 224–308 (SDFV…VVYL). A run of 6 helical transmembrane segments spans residues 7 to 27 (LVHL…TCPL), 41 to 57 (FYIS…ASVA), 111 to 131 (NVFD…AGFT), 180 to 200 (MSAS…YESI), 226 to 246 (FVGM…IAYP), and 291 to 311 (QIPN…LLNG).

It belongs to the mitochondrial carrier (TC 2.A.29) family.

The protein localises to the mitochondrion inner membrane. The protein is Solute carrier family 25 member 36-A (slc25a36a) of Danio rerio (Zebrafish).